We begin with the raw amino-acid sequence, 667 residues long: WD40 repeat-containing protein DDB_G0271002 (667 aa).

WD repeat units lie at residues 165–204 (NHGVSTWGIAICPSKPLIAVSSNSHKITIWNLDDENPQET) and 210–249 (KHKHNIPSIDFSPCGNYLVSVSIDKNIRIWDVNKRQLLRI). The segment covering 278-293 (SSNSRDNNNNNSNSNN) has biased composition (low complexity). Disordered regions lie at residues 278–301 (SSNSRDNNNNNSNSNNNGGGGIII), 316–345 (LVENNQEVEPMPEEEEEEEEEEVNQVDNDD), and 389–440 (DIIF…ATTT). Residues 325–345 (PMPEEEEEEEEEEVNQVDNDD) show a composition bias toward acidic residues. Residues 400–410 (NQHQQQQQQNQ) are compositionally biased toward low complexity. Residues 411–428 (EIEEEGQEGQEEQEDGTE) show a composition bias toward acidic residues. Residues 429 to 440 (NENNQGTIATTT) are compositionally biased toward low complexity.

In Dictyostelium discoideum (Social amoeba), this protein is WD40 repeat-containing protein DDB_G0271002.